We begin with the raw amino-acid sequence, 264 residues long: Thymidylate synthase (264 aa).

Arginine 21 is a binding site for dUMP. Histidine 51 is a (6R)-5,10-methylene-5,6,7,8-tetrahydrofolate binding site. A dUMP-binding site is contributed by 126–127 (RR). Cysteine 146 functions as the Nucleophile in the catalytic mechanism. Residues 166–169 (RSAD), asparagine 177, and 207–209 (HIY) each bind dUMP. Aspartate 169 contacts (6R)-5,10-methylene-5,6,7,8-tetrahydrofolate. Position 263 (serine 263) interacts with (6R)-5,10-methylene-5,6,7,8-tetrahydrofolate.

Belongs to the thymidylate synthase family. Bacterial-type ThyA subfamily. As to quaternary structure, homodimer.

The protein localises to the cytoplasm. The enzyme catalyses dUMP + (6R)-5,10-methylene-5,6,7,8-tetrahydrofolate = 7,8-dihydrofolate + dTMP. It functions in the pathway pyrimidine metabolism; dTTP biosynthesis. Its function is as follows. Catalyzes the reductive methylation of 2'-deoxyuridine-5'-monophosphate (dUMP) to 2'-deoxythymidine-5'-monophosphate (dTMP) while utilizing 5,10-methylenetetrahydrofolate (mTHF) as the methyl donor and reductant in the reaction, yielding dihydrofolate (DHF) as a by-product. This enzymatic reaction provides an intracellular de novo source of dTMP, an essential precursor for DNA biosynthesis. In Exiguobacterium sp. (strain ATCC BAA-1283 / AT1b), this protein is Thymidylate synthase.